The sequence spans 132 residues: uncharacterized protein (132 aa).

An N-terminal signal peptide occupies residues 1–17 (MCPECFFLMLFFCGYRA). The segment covering 25–39 (SSSSSSSSSSSFRSS) has biased composition (low complexity). Positions 25–79 (SSSSSSSSSSSFRSSPAYGFSGRPPGGAGCRERSQRSCLRPGGLPSLTRNPGLQR) are disordered.

This is an uncharacterized protein from Escherichia coli (strain K12).